The chain runs to 434 residues: Methylenetetrahydrofolate--tRNA-(uracil-5-)-methyltransferase TrmFO (434 aa).

8–13 contributes to the FAD binding site; that stretch reads GAGLAG.

The protein belongs to the MnmG family. TrmFO subfamily. The cofactor is FAD.

It localises to the cytoplasm. It carries out the reaction uridine(54) in tRNA + (6R)-5,10-methylene-5,6,7,8-tetrahydrofolate + NADH + H(+) = 5-methyluridine(54) in tRNA + (6S)-5,6,7,8-tetrahydrofolate + NAD(+). It catalyses the reaction uridine(54) in tRNA + (6R)-5,10-methylene-5,6,7,8-tetrahydrofolate + NADPH + H(+) = 5-methyluridine(54) in tRNA + (6S)-5,6,7,8-tetrahydrofolate + NADP(+). Functionally, catalyzes the folate-dependent formation of 5-methyl-uridine at position 54 (M-5-U54) in all tRNAs. In Exiguobacterium sibiricum (strain DSM 17290 / CCUG 55495 / CIP 109462 / JCM 13490 / 255-15), this protein is Methylenetetrahydrofolate--tRNA-(uracil-5-)-methyltransferase TrmFO.